The sequence spans 360 residues: Photosystem II protein D1 2 (360 aa).

The next 3 membrane-spanning stretches (helical) occupy residues 29–46, 118–133, and 142–156; these read YIGW…AATI, HFLI…EWEL, and WIPV…AATA. Residue His-118 participates in chlorophyll a binding. A pheophytin a-binding site is contributed by Tyr-126. Asp-170 and Glu-189 together coordinate [CaMn4O5] cluster. Residues 197–218 form a helical membrane-spanning segment; sequence FHMLGVAGVFGGALFAAMHGSL. Chlorophyll a is bound at residue His-198. Residues His-215 and 264-265 contribute to the a quinone site; that span reads SF. His-215 provides a ligand contact to Fe cation. Fe cation is bound at residue His-272. A helical transmembrane segment spans residues 274–288; that stretch reads FLAAWPVVGIWFAAL. His-332, Glu-333, Asp-342, and Ala-344 together coordinate [CaMn4O5] cluster. Positions 345 to 360 are excised as a propeptide; that stretch reads SGELAPVAMIAPSIEA.

Belongs to the reaction center PufL/M/PsbA/D family. PSII is composed of 1 copy each of membrane proteins PsbA, PsbB, PsbC, PsbD, PsbE, PsbF, PsbH, PsbI, PsbJ, PsbK, PsbL, PsbM, PsbT, PsbX, PsbY, PsbZ, Psb30/Ycf12, peripheral proteins PsbO, CyanoQ (PsbQ), PsbU, PsbV and a large number of cofactors. It forms dimeric complexes. The D1/D2 heterodimer binds P680, chlorophylls that are the primary electron donor of PSII, and subsequent electron acceptors. It shares a non-heme iron and each subunit binds pheophytin, quinone, additional chlorophylls, carotenoids and lipids. D1 provides most of the ligands for the Mn4-Ca-O5 cluster of the oxygen-evolving complex (OEC). There is also a Cl(-1) ion associated with D1 and D2, which is required for oxygen evolution. The PSII complex binds additional chlorophylls, carotenoids and specific lipids. serves as cofactor. Tyr-161 forms a radical intermediate that is referred to as redox-active TyrZ, YZ or Y-Z. In terms of processing, C-terminally processed by CtpA; processing is essential to allow assembly of the oxygen-evolving complex and thus photosynthetic growth.

It localises to the cellular thylakoid membrane. It carries out the reaction 2 a plastoquinone + 4 hnu + 2 H2O = 2 a plastoquinol + O2. Photosystem II (PSII) is a light-driven water:plastoquinone oxidoreductase that uses light energy to abstract electrons from H(2)O, generating O(2) and a proton gradient subsequently used for ATP formation. It consists of a core antenna complex that captures photons, and an electron transfer chain that converts photonic excitation into a charge separation. The D1/D2 (PsbA/PsbD) reaction center heterodimer binds P680, the primary electron donor of PSII as well as several subsequent electron acceptors. The chain is Photosystem II protein D1 2 from Synechococcus elongatus.